Here is a 170-residue protein sequence, read N- to C-terminus: Urease accessory protein UreE (170 aa).

This sequence belongs to the UreE family.

Its subcellular location is the cytoplasm. In terms of biological role, involved in urease metallocenter assembly. Binds nickel. Probably functions as a nickel donor during metallocenter assembly. The sequence is that of Urease accessory protein UreE from Helicobacter pylori (strain HPAG1).